Here is a 171-residue protein sequence, read N- to C-terminus: Apoptosis regulator Bcl-2 homolog (171 aa).

Interacts with host BECN1; this interaction inhibits host autophagy. Interacts with host BAK1 and BAX.

It localises to the host cytoplasm. Plays a role in the protection against apoptosis mediated by cytotoxic cells during the immune response to acute and persistent viral infection. Contributes therefore to latency establishment. Plays also a role in the inhibition of host starvation-induced autophagy which ultimately contributes to the viral chronic infection. This is Apoptosis regulator Bcl-2 homolog (vBCL2) from Murid herpesvirus 4 (MuHV-4).